The following is a 525-amino-acid chain: Glutamate--cysteine ligase (525 aa).

Belongs to the glutamate--cysteine ligase type 1 family. Type 1 subfamily.

It carries out the reaction L-cysteine + L-glutamate + ATP = gamma-L-glutamyl-L-cysteine + ADP + phosphate + H(+). Its pathway is sulfur metabolism; glutathione biosynthesis; glutathione from L-cysteine and L-glutamate: step 1/2. The polypeptide is Glutamate--cysteine ligase (Vibrio vulnificus (strain YJ016)).